The following is an 867-amino-acid chain: MENEKENLFCEPHKRGLMKTPLKESTTANIVLAEIQPDFGPLTTPTKPKEGSQGEPWTPTANLKMLISAVSPEIRNRDQKRGLFDNRSGLPEAKDCIHEHLSGDEFEKSQPSRKEKSLGLLCHKFLARYPNYPNPAVNNDICLDEVAEELNVERRRIYDIVNVLESLHMVSRLAKNRYTWHGRHNLNKTLGTLKSIGEENKYAEQIMMIKKKEYEQEFDFIKSYSIEDHIIKSNTGPNGHPDMCFVELPGVEFRAASVNSRKDKSLRVMSQKFVMLFLVSTPQIVSLEVAAKILIGEDHVEDLDKSKFKTKIRRLYDIANVLSSLDLIKKVHVTEERGRKPAFKWTGPEISPNTSGSSPVIHFTPSDLEVRRSSKENCAKNLFSTRGKPNFTRHPSLIKLVKSIESDRRKINSAPSSPIKTNKAESSQNSAPFPSKMAQLAAICKMQLEEQSSESRQKVKVQLARSGPCKPVAPLDPPVNAEMELTAPSLIQPLGMVPLIPSPLSSAVPLILPQAPSGPSYAIYLQPTQAHQSVTPPQGLSPTVCTTHSSKATGSKDSTDATTEKAANDTSKASASTRPGSLLPAPERQGAKSRTREPAGERGSKRASMLEDSGSKKKFKEDLKGLENVSATLFPSGYLIPLTQCSSLGAESILSGKENSSALSPNHRIYSSPIAGVIPVTSSELTAVNFPSFHVTPLKLMVSPTSVAAVPVGNSPALASSHPVPIQNPSSAIVNFTLQHLGLISPNVQLSASPGSGIVPVSPRIESVNVAPENAGTQQGRATNYDSPVPGQSQPNGQSVAVTGAQQPVPVTPKGSQLVAESFFRTPGGPTKPTSSSCMDFEGANKTSLGTLFVPQRKLEVSTEDVH.

The disordered stretch occupies residues 38 to 58 (DFGPLTTPTKPKEGSQGEPWT). Ser-71 and Ser-102 each carry phosphoserine. DNA-binding regions lie at residues 113–182 (RKEK…TWHG) and 261–347 (RKDK…KWTG). Disordered stretches follow at residues 408 to 432 (RRKI…NSAP), 532 to 616 (QSVT…SGSK), and 771 to 800 (APEN…GQSV). 2 positions are modified to phosphoserine: Ser-413 and Ser-417. Polar residues-rich tracts occupy residues 413 to 432 (SAPS…NSAP) and 532 to 556 (QSVT…TGSK). Positions 557–567 (DSTDATTEKAA) are enriched in basic and acidic residues. Residues 568 to 579 (NDTSKASASTRP) are compositionally biased toward polar residues. The span at 594–604 (RTREPAGERGS) shows a compositional bias: basic and acidic residues. A compositionally biased stretch (polar residues) spans 775–800 (AGTQQGRATNYDSPVPGQSQPNGQSV).

It belongs to the E2F/DP family. Homodimer and heterodimer: mainly forms homodimers and, to a lesser extent, heterodimers with E2F8. Dimerization is important for DNA-binding. Interacts with HIF1A.

It localises to the nucleus. Its function is as follows. Atypical E2F transcription factor that participates in various processes such as angiogenesis and polyploidization of specialized cells. Mainly acts as a transcription repressor that binds DNA independently of DP proteins and specifically recognizes the E2 recognition site 5'-TTTC[CG]CGC-3'. Directly represses transcription of classical E2F transcription factors such as E2F1: component of a feedback loop in S phase by repressing the expression of E2F1, thereby preventing p53/TP53-dependent apoptosis. Plays a key role in polyploidization of cells in placenta and liver by regulating the endocycle, probably by repressing genes promoting cytokinesis and antagonizing action of classical E2F proteins (E2F1, E2F2 and/or E2F3). Required for placental development by promoting polyploidization of trophoblast giant cells. Acts as a promoter of sprouting angiogenesis, possibly by acting as a transcription activator: associates with HIF1A, recognizes and binds the VEGFA promoter, which is different from canonical E2 recognition site, and activates expression of the VEGFA gene. The sequence is that of Transcription factor E2F8 (E2F8) from Homo sapiens (Human).